The chain runs to 115 residues: MIGLTKVCWTMSKKEVVDNSIKIEYLRSSFDNVQSLIQFADQKIGNLLLIDTITVGIFITYATNYELSLKDLTVWNILLFITGLIFTVSSVILVYKSIIKVVCSAQSELGLFYKS.

Helical transmembrane passes span Ile-44 to Asn-64 and Val-74 to Val-94.

The protein localises to the cell inner membrane. Functionally, pycsar (pyrimidine cyclase system for antiphage resistance) provides immunity against bacteriophage. The pyrimidine cyclase (PycC) synthesizes cyclic nucleotides in response to infection; these serve as specific second messenger signals. The signals activate the adjacent effector, leading to bacterial cell death and abortive phage infection. A clade C Pycsar system. In terms of biological role, the effector gene of a two-gene Pycsar system. Expression of this and adjacent uridylate cyclase TpPycC (AC A0A1T4LJ54) probably confers resistance to bacteriophage. The genes are probably only expressed in response to bacteriophage infection. Probably only responds to cUMP (produced by its cognate NTP cyclase), acts by impairing membrane integrity. The protein is Pycsar effector protein TpPycTM of Treponema porcinum.